Reading from the N-terminus, the 294-residue chain is NAD kinase (294 aa).

The active-site Proton acceptor is Asp74. NAD(+) is bound by residues 74–75, 148–149, His159, Arg176, Asp178, 189–194, and Gln249; these read DG, NE, and TAYSLS.

This sequence belongs to the NAD kinase family. It depends on a divalent metal cation as a cofactor.

The protein localises to the cytoplasm. It carries out the reaction NAD(+) + ATP = ADP + NADP(+) + H(+). Functionally, involved in the regulation of the intracellular balance of NAD and NADP, and is a key enzyme in the biosynthesis of NADP. Catalyzes specifically the phosphorylation on 2'-hydroxyl of the adenosine moiety of NAD to yield NADP. The protein is NAD kinase of Vibrio campbellii (strain ATCC BAA-1116).